The sequence spans 179 residues: Large ribosomal subunit protein uL5 (179 aa).

This sequence belongs to the universal ribosomal protein uL5 family. As to quaternary structure, part of the 50S ribosomal subunit; part of the 5S rRNA/L5/L18/L25 subcomplex. Contacts the 5S rRNA and the P site tRNA. Forms a bridge to the 30S subunit in the 70S ribosome.

Its function is as follows. This is one of the proteins that bind and probably mediate the attachment of the 5S RNA into the large ribosomal subunit, where it forms part of the central protuberance. In the 70S ribosome it contacts protein S13 of the 30S subunit (bridge B1b), connecting the 2 subunits; this bridge is implicated in subunit movement. Contacts the P site tRNA; the 5S rRNA and some of its associated proteins might help stabilize positioning of ribosome-bound tRNAs. The sequence is that of Large ribosomal subunit protein uL5 from Rickettsia peacockii (strain Rustic).